The following is a 678-amino-acid chain: Methionine--tRNA ligase (678 aa).

A 'HIGH' region motif is present at residues 12–22 (PYANGPIHLGH). The Zn(2+) site is built by C143, C146, C156, and C159. Positions 328-332 (KMSKS) match the 'KMSKS' region motif. ATP is bound at residue K331. Positions 577 to 678 (DFSKVDLRIA…SGAQPGMRVK (102 aa)) constitute a tRNA-binding domain.

Belongs to the class-I aminoacyl-tRNA synthetase family. MetG type 1 subfamily. In terms of assembly, homodimer. The cofactor is Zn(2+).

The protein resides in the cytoplasm. The enzyme catalyses tRNA(Met) + L-methionine + ATP = L-methionyl-tRNA(Met) + AMP + diphosphate. In terms of biological role, is required not only for elongation of protein synthesis but also for the initiation of all mRNA translation through initiator tRNA(fMet) aminoacylation. The polypeptide is Methionine--tRNA ligase (Acidithiobacillus ferrooxidans (strain ATCC 23270 / DSM 14882 / CIP 104768 / NCIMB 8455) (Ferrobacillus ferrooxidans (strain ATCC 23270))).